The following is a 404-amino-acid chain: Cysteine desulfurase IscS (404 aa).

Pyridoxal 5'-phosphate contacts are provided by residues 75–76 (AT), Asn-155, Gln-183, and 203–205 (SSH). Lys-206 is modified (N6-(pyridoxal phosphate)lysine). Residue Thr-243 participates in pyridoxal 5'-phosphate binding. Residue Cys-328 is the Cysteine persulfide intermediate of the active site. Cys-328 provides a ligand contact to [2Fe-2S] cluster.

This sequence belongs to the class-V pyridoxal-phosphate-dependent aminotransferase family. NifS/IscS subfamily. In terms of assembly, homodimer. Forms a heterotetramer with IscU, interacts with other sulfur acceptors. Pyridoxal 5'-phosphate serves as cofactor.

The protein localises to the cytoplasm. The enzyme catalyses (sulfur carrier)-H + L-cysteine = (sulfur carrier)-SH + L-alanine. It participates in cofactor biosynthesis; iron-sulfur cluster biosynthesis. Its function is as follows. Master enzyme that delivers sulfur to a number of partners involved in Fe-S cluster assembly, tRNA modification or cofactor biosynthesis. Catalyzes the removal of elemental sulfur atoms from cysteine to produce alanine. Functions as a sulfur delivery protein for Fe-S cluster synthesis onto IscU, an Fe-S scaffold assembly protein, as well as other S acceptor proteins. The polypeptide is Cysteine desulfurase IscS (Histophilus somni (strain 2336) (Haemophilus somnus)).